A 335-amino-acid polypeptide reads, in one-letter code: Ornithine carbamoyltransferase (335 aa).

Carbamoyl phosphate is bound by residues Ser-56–Thr-59, Gln-83, Arg-107, and His-134–Gln-137. L-ornithine is bound by residues Asn-168, Asp-232, and Ser-236 to Met-237. Carbamoyl phosphate-binding positions include Cys-274–Leu-275 and Arg-320.

This sequence belongs to the aspartate/ornithine carbamoyltransferase superfamily. OTCase family.

It localises to the cytoplasm. The catalysed reaction is carbamoyl phosphate + L-ornithine = L-citrulline + phosphate + H(+). The protein operates within amino-acid biosynthesis; L-arginine biosynthesis; L-arginine from L-ornithine and carbamoyl phosphate: step 1/3. Its function is as follows. Reversibly catalyzes the transfer of the carbamoyl group from carbamoyl phosphate (CP) to the N(epsilon) atom of ornithine (ORN) to produce L-citrulline. The sequence is that of Ornithine carbamoyltransferase from Pectobacterium atrosepticum (strain SCRI 1043 / ATCC BAA-672) (Erwinia carotovora subsp. atroseptica).